A 259-amino-acid chain; its full sequence is Type III pantothenate kinase (259 aa).

Residue 6-13 (DTGNTNTV) participates in ATP binding. 107–110 (GPDR) is a binding site for substrate. Aspartate 109 functions as the Proton acceptor in the catalytic mechanism. K(+) is bound at residue aspartate 129. Residue threonine 132 coordinates ATP. Threonine 184 is a substrate binding site.

This sequence belongs to the type III pantothenate kinase family. Homodimer. The cofactor is NH4(+). It depends on K(+) as a cofactor.

The protein localises to the cytoplasm. The enzyme catalyses (R)-pantothenate + ATP = (R)-4'-phosphopantothenate + ADP + H(+). It participates in cofactor biosynthesis; coenzyme A biosynthesis; CoA from (R)-pantothenate: step 1/5. Functionally, catalyzes the phosphorylation of pantothenate (Pan), the first step in CoA biosynthesis. In Paracoccus denitrificans (strain Pd 1222), this protein is Type III pantothenate kinase.